The primary structure comprises 300 residues: 1D-myo-inositol 2-acetamido-2-deoxy-alpha-D-glucopyranoside deacetylase (300 aa).

Residues His-13, Asp-16, and His-147 each contribute to the Zn(2+) site.

Belongs to the MshB deacetylase family. Zn(2+) serves as cofactor.

It carries out the reaction 1D-myo-inositol 2-acetamido-2-deoxy-alpha-D-glucopyranoside + H2O = 1D-myo-inositol 2-amino-2-deoxy-alpha-D-glucopyranoside + acetate. Its function is as follows. Catalyzes the deacetylation of 1D-myo-inositol 2-acetamido-2-deoxy-alpha-D-glucopyranoside (GlcNAc-Ins) in the mycothiol biosynthesis pathway. The protein is 1D-myo-inositol 2-acetamido-2-deoxy-alpha-D-glucopyranoside deacetylase of Mycobacterium avium (strain 104).